The primary structure comprises 456 residues: Bis(5'-adenosyl)-triphosphatase enpp4 (456 aa).

Residues 1 to 18 form the signal peptide; that stretch reads MFNMKILVIPLFWGLVTG. Over 19-410 the chain is Extracellular; sequence YKGNSSDSSA…DQWCINLPEA (392 aa). Aspartate 37 and threonine 73 together coordinate Zn(2+). Residue threonine 73 is the AMP-threonine intermediate of the active site. Asparagine 94 contacts substrate. Asparagine 148 is a glycosylation site (N-linked (GlcNAc...) asparagine). Tyrosine 157 is a substrate binding site. Asparagine 169 carries N-linked (GlcNAc...) asparagine glycosylation. Zn(2+) is bound by residues aspartate 192, histidine 196, aspartate 240, and histidine 241. Aspartate 192 provides a ligand contact to substrate. A disulfide bond links cysteine 257 and cysteine 290. N-linked (GlcNAc...) asparagine glycosylation is found at asparagine 279 and asparagine 330. Histidine 339 lines the Zn(2+) pocket. N-linked (GlcNAc...) asparagine glycosylation is present at asparagine 389. Cysteine 397 and cysteine 404 form a disulfide bridge. A helical membrane pass occupies residues 411–431; it reads IGIVVSALLVLTMLTGLMIFM. At 432 to 456 the chain is on the cytoplasmic side; that stretch reads RSRASTSRPFSRLQLQEDDDDPLID.

It belongs to the nucleotide pyrophosphatase/phosphodiesterase family. Requires Zn(2+) as cofactor.

It is found in the cell membrane. It carries out the reaction P(1),P(3)-bis(5'-adenosyl) triphosphate + H2O = AMP + ADP + 2 H(+). In terms of biological role, hydrolyzes extracellular Ap3A into AMP and ADP, and Ap4A into AMP and ATP. Ap3A and Ap4A are diadenosine polyphosphates thought to induce proliferation of vascular smooth muscle cells. Acts as a procoagulant, mediating platelet aggregation at the site of nascent thrombus via release of ADP from Ap3A and activation of ADP receptors. The protein is Bis(5'-adenosyl)-triphosphatase enpp4 (Enpp4) of Mus musculus (Mouse).